The chain runs to 216 residues: 3-isopropylmalate dehydratase small subunit (216 aa).

It belongs to the LeuD family. LeuD type 1 subfamily. As to quaternary structure, heterodimer of LeuC and LeuD.

It carries out the reaction (2R,3S)-3-isopropylmalate = (2S)-2-isopropylmalate. It functions in the pathway amino-acid biosynthesis; L-leucine biosynthesis; L-leucine from 3-methyl-2-oxobutanoate: step 2/4. In terms of biological role, catalyzes the isomerization between 2-isopropylmalate and 3-isopropylmalate, via the formation of 2-isopropylmaleate. This Polaromonas sp. (strain JS666 / ATCC BAA-500) protein is 3-isopropylmalate dehydratase small subunit.